The primary structure comprises 257 residues: MAEAPAKKLTVSATEVAVEIVNMNKWYGDFHVLRDINLKVMRGERIVIAGPSGSGKSTMIRCINRLEEHQKGKIVVDGTELTNDLKKIDEVRREVGMVFQHFNLFPHLTILENCTLAPIWVRKMPKKQAEEVAMHFLKRVKIPEQANKYPGQLSGGQQQRVAIARSLCMNPKIMLFDEPTSALDPEMIKEVLDTMVGLAEEGMTMLCVTHEMGFARQVANRVIFMDQGQIVEQNEPAAFFDNPQHERTKLFLSQILH.

The ABC transporter domain maps to 18-252 (VEIVNMNKWY…PQHERTKLFL (235 aa)). 50–57 (GPSGSGKS) is an ATP binding site.

Belongs to the ABC transporter superfamily.

Its function is as follows. Part of a binding-protein-dependent transport system for L-amino acids, affects the uptake as well as the efflux of these amino acids. Probably responsible for energy coupling to the transport system. The chain is General L-amino acid transport ATP-binding protein AapP (aapP) from Rhizobium johnstonii (strain DSM 114642 / LMG 32736 / 3841) (Rhizobium leguminosarum bv. viciae).